The chain runs to 142 residues: Protein OrfX1 (142 aa).

It belongs to the TULIP P47 family. In terms of assembly, orfX1 was not detected as part of a crude toxin extract that includes BoNTA2/NTNH, P47, OrfX2 and OrfX3.

Functionally, part of a botulinum neurotoxin type A2 (BoNT) locus; may be part of a progenitor toxin complex required to protect BoNT during its passage through the host gastrointestinal tract. Binds phosphatidylinositol (3,4) bisphosphate, phosphatidylethanolamine and phosphatidylserine. The polypeptide is Protein OrfX1 (orfX1) (Clostridium botulinum (strain Kyoto / Type A2)).